A 98-amino-acid polypeptide reads, in one-letter code: Co-chaperonin GroES 3 (98 aa).

This sequence belongs to the GroES chaperonin family. As to quaternary structure, heptamer of 7 subunits arranged in a ring. Interacts with the chaperonin GroEL.

The protein resides in the cytoplasm. Functionally, together with the chaperonin GroEL, plays an essential role in assisting protein folding. The GroEL-GroES system forms a nano-cage that allows encapsulation of the non-native substrate proteins and provides a physical environment optimized to promote and accelerate protein folding. GroES binds to the apical surface of the GroEL ring, thereby capping the opening of the GroEL channel. The polypeptide is Co-chaperonin GroES 3 (Mesorhizobium japonicum (strain LMG 29417 / CECT 9101 / MAFF 303099) (Mesorhizobium loti (strain MAFF 303099))).